A 289-amino-acid chain; its full sequence is NAD kinase (289 aa).

The active-site Proton acceptor is D82. NAD(+) contacts are provided by residues 82–83 (DG), R87, 150–151 (NE), K161, R178, D180, 191–196 (TAYAMS), A215, and Q250.

This sequence belongs to the NAD kinase family. A divalent metal cation serves as cofactor.

It is found in the cytoplasm. It carries out the reaction NAD(+) + ATP = ADP + NADP(+) + H(+). Involved in the regulation of the intracellular balance of NAD and NADP, and is a key enzyme in the biosynthesis of NADP. Catalyzes specifically the phosphorylation on 2'-hydroxyl of the adenosine moiety of NAD to yield NADP. This Methanosarcina mazei (strain ATCC BAA-159 / DSM 3647 / Goe1 / Go1 / JCM 11833 / OCM 88) (Methanosarcina frisia) protein is NAD kinase.